The chain runs to 130 residues: Small ribosomal subunit protein uS8 (130 aa).

Belongs to the universal ribosomal protein uS8 family. In terms of assembly, part of the 30S ribosomal subunit.

Functionally, one of the primary rRNA binding proteins, it binds directly to 16S rRNA central domain where it helps coordinate assembly of the platform of the 30S subunit. This chain is Small ribosomal subunit protein uS8, found in Methanosphaerula palustris (strain ATCC BAA-1556 / DSM 19958 / E1-9c).